The sequence spans 1265 residues: Topoisomerase 1-associated factor 1 (1265 aa).

Residues 650–659 (DVNGNKNGQD) are compositionally biased toward polar residues. Disordered regions lie at residues 650 to 670 (DVNGNKNGQDTTRDADEDAIS), 1019 to 1052 (GKQIPRGTAKKRSAIKPKSRKSQPTGIGGIDDDT), and 1167 to 1226 (HLSL…DPPS). Positions 1026–1039 (TAKKRSAIKPKSRK) are enriched in basic residues. Composition is skewed to low complexity over residues 1171–1188 (SPNNENNSAHSSENLSSD) and 1201–1211 (SDSEYNSSNSS).

It belongs to the timeless family. Component of the fork protection complex (FPC) consisting of TOF1 and CSM3.

It is found in the nucleus. Functionally, forms a fork protection complex (FPC) with CSM3 and which is required for chromosome segregation during meiosis and DNA damage repair. FPC coordinates leading and lagging strand synthesis and moves with the replication fork. FPC stabilizes replication forks in a configuration that is recognized by replication checkpoint sensors. In Eremothecium gossypii (strain ATCC 10895 / CBS 109.51 / FGSC 9923 / NRRL Y-1056) (Yeast), this protein is Topoisomerase 1-associated factor 1 (TOF1).